The following is a 229-amino-acid chain: Auxin-responsive protein IAA17 (229 aa).

An EAR-like (transcriptional repression) motif is present at residues 14–18 (LCLGL). The 102-residue stretch at 110-211 (AAFVKVSMDG…TCKRLRLMKG (102 aa)) folds into the PB1 domain.

Belongs to the Aux/IAA family. In terms of assembly, homodimers and heterodimers. Interacts with the auxin response factors ARF1 and IAA24. Interacts with IAA1. Interacts with TPL. Interacts (via PB1 domain) with ARF7 (via PB1 domain). In terms of processing, phosphorylated by phytochrome A in vitro.

It localises to the nucleus. In terms of biological role, aux/IAA proteins are short-lived transcriptional factors that function as repressors of early auxin response genes at low auxin concentrations. Repression is thought to result from the interaction with auxin response factors (ARFs), proteins that bind to the auxin-responsive promoter element (AuxRE). Formation of heterodimers with ARF proteins may alter their ability to modulate early auxin response genes expression. This chain is Auxin-responsive protein IAA17 (IAA17), found in Arabidopsis thaliana (Mouse-ear cress).